The chain runs to 101 residues: Small ribosomal subunit protein uS14 (101 aa).

It belongs to the universal ribosomal protein uS14 family. As to quaternary structure, part of the 30S ribosomal subunit. Contacts proteins S3 and S10.

Its function is as follows. Binds 16S rRNA, required for the assembly of 30S particles and may also be responsible for determining the conformation of the 16S rRNA at the A site. The polypeptide is Small ribosomal subunit protein uS14 (Hahella chejuensis (strain KCTC 2396)).